The sequence spans 44 residues: pyr operon leader peptide (44 aa).

The polypeptide is pyr operon leader peptide (pyrL) (Escherichia coli O157:H7).